Consider the following 356-residue polypeptide: tRNA N6-adenosine threonylcarbamoyltransferase (356 aa).

Fe cation-binding residues include His-115 and His-119. Substrate contacts are provided by residues 138–142 (LVSGG), Asp-171, Gly-184, and Asn-283. Residue Asp-311 participates in Fe cation binding.

This sequence belongs to the KAE1 / TsaD family. It depends on Fe(2+) as a cofactor.

The protein resides in the cytoplasm. The catalysed reaction is L-threonylcarbamoyladenylate + adenosine(37) in tRNA = N(6)-L-threonylcarbamoyladenosine(37) in tRNA + AMP + H(+). Required for the formation of a threonylcarbamoyl group on adenosine at position 37 (t(6)A37) in tRNAs that read codons beginning with adenine. Is involved in the transfer of the threonylcarbamoyl moiety of threonylcarbamoyl-AMP (TC-AMP) to the N6 group of A37, together with TsaE and TsaB. TsaD likely plays a direct catalytic role in this reaction. The sequence is that of tRNA N6-adenosine threonylcarbamoyltransferase from Prochlorococcus marinus (strain AS9601).